Reading from the N-terminus, the 138-residue chain is Probable non-specific lipid-transfer protein 1 (138 aa).

The first 36 residues, 1–36, serve as a signal peptide directing secretion; sequence MRTVSARSSVALVVIVAAVLVWTSSASVAPAPAPGS. Disulfide bonds link Cys-40–Cys-88, Cys-50–Cys-65, Cys-66–Cys-111, and Cys-86–Cys-127.

It belongs to the plant LTP family.

Plant non-specific lipid-transfer proteins transfer phospholipids as well as galactolipids across membranes. May play a role in wax or cutin deposition in the cell walls of expanding epidermal cells and certain secretory tissues. The polypeptide is Probable non-specific lipid-transfer protein 1 (Parietaria judaica (Pellitory-of-the-wall)).